Reading from the N-terminus, the 172-residue chain is Protein GrpE (172 aa).

It belongs to the GrpE family. Homodimer.

It localises to the cytoplasm. Participates actively in the response to hyperosmotic and heat shock by preventing the aggregation of stress-denatured proteins, in association with DnaK and GrpE. It is the nucleotide exchange factor for DnaK and may function as a thermosensor. Unfolded proteins bind initially to DnaJ; upon interaction with the DnaJ-bound protein, DnaK hydrolyzes its bound ATP, resulting in the formation of a stable complex. GrpE releases ADP from DnaK; ATP binding to DnaK triggers the release of the substrate protein, thus completing the reaction cycle. Several rounds of ATP-dependent interactions between DnaJ, DnaK and GrpE are required for fully efficient folding. In Thermotoga maritima (strain ATCC 43589 / DSM 3109 / JCM 10099 / NBRC 100826 / MSB8), this protein is Protein GrpE.